The chain runs to 116 residues: Nucleoid-associated protein EUBELI_02017 (116 aa).

The segment covering M1–P12 has biased composition (gly residues). The interval M1–S42 is disordered. Over residues G13–Q26 the composition is skewed to low complexity.

This sequence belongs to the YbaB/EbfC family. In terms of assembly, homodimer.

Its subcellular location is the cytoplasm. The protein resides in the nucleoid. Binds to DNA and alters its conformation. May be involved in regulation of gene expression, nucleoid organization and DNA protection. The protein is Nucleoid-associated protein EUBELI_02017 of Lachnospira eligens (strain ATCC 27750 / DSM 3376 / VPI C15-48 / C15-B4) (Eubacterium eligens).